Reading from the N-terminus, the 211-residue chain is Methylthioribulose-1-phosphate dehydratase (211 aa).

Zn(2+) contacts are provided by His-101 and His-103.

It belongs to the aldolase class II family. MtnB subfamily. Requires Zn(2+) as cofactor.

The enzyme catalyses 5-(methylsulfanyl)-D-ribulose 1-phosphate = 5-methylsulfanyl-2,3-dioxopentyl phosphate + H2O. The protein operates within amino-acid biosynthesis; L-methionine biosynthesis via salvage pathway; L-methionine from S-methyl-5-thio-alpha-D-ribose 1-phosphate: step 2/6. Catalyzes the dehydration of methylthioribulose-1-phosphate (MTRu-1-P) into 2,3-diketo-5-methylthiopentyl-1-phosphate (DK-MTP-1-P). The polypeptide is Methylthioribulose-1-phosphate dehydratase (Alcanivorax borkumensis (strain ATCC 700651 / DSM 11573 / NCIMB 13689 / SK2)).